The primary structure comprises 401 residues: Nicotinate phosphoribosyltransferase (401 aa).

Phosphohistidine; by autocatalysis is present on histidine 221.

This sequence belongs to the NAPRTase family. Post-translationally, transiently phosphorylated on a His residue during the reaction cycle. Phosphorylation strongly increases the affinity for substrates and increases the rate of nicotinate D-ribonucleotide production. Dephosphorylation regenerates the low-affinity form of the enzyme, leading to product release.

It carries out the reaction nicotinate + 5-phospho-alpha-D-ribose 1-diphosphate + ATP + H2O = nicotinate beta-D-ribonucleotide + ADP + phosphate + diphosphate. The protein operates within cofactor biosynthesis; NAD(+) biosynthesis; nicotinate D-ribonucleotide from nicotinate: step 1/1. Functionally, catalyzes the synthesis of beta-nicotinate D-ribonucleotide from nicotinate and 5-phospho-D-ribose 1-phosphate at the expense of ATP. The sequence is that of Nicotinate phosphoribosyltransferase from Edwardsiella ictaluri (strain 93-146).